Here is a 588-residue protein sequence, read N- to C-terminus: MLAHSTAQDLILQQRSSDDHPQTNPRQTGCGAFIILSSVIAAISGLLVGYELGIISGALLQLQSLLELTCQQQEIVVSALLIGALVASLVGGCLIDLYGRRTTIIFTSILLVFANLLPVVVVSYGSLIAGRIFIGVSISLSAIATCVYIAELSPQDKRGMLVSLNELMIVAGILLAYICNYLFASVNNGWKYMFGLITPLAALQAVAMFFLPRSPRFLIMKGYDDAAGKVLQKLRATTDINEELTAIKSSIKAEYQYKFLDLFCSRDNMRARLLIGLTLSFFVQITGQPNILFYASTVLKSVGFQSTEAASLASTGIGVVKVVSTIPAIFLVDKIGSKTFLCIGSAVMAVSLVSVGLVSLQLDVNYNNICKVHTVQNHSLQDSFVYGPVALAKHNESLFEETGTWLESTKASYHSTSQNGTKLLHVSAPEDSSFGFTVKEPKVKSQSDEIPEYMKWLCLSSLLAFVAAFSIGLGPMAWLVQSEIFPAGIKGRAFAITSSMNWGMNLLISLTFLTLTEMIGLPWMLFGYALMSIASLVFVIMFVPNTKGRPLEEISKELANRSYMCNAVCHRRRSKKKLTPVALIQSPA.

The Cytoplasmic segment spans residues 1 to 28 (MLAHSTAQDLILQQRSSDDHPQTNPRQT). Residues 29–49 (GCGAFIILSSVIAAISGLLVG) form a helical membrane-spanning segment. Topologically, residues 50-74 (YELGIISGALLQLQSLLELTCQQQE) are extracellular. Residues 75–95 (IVVSALLIGALVASLVGGCLI) form a helical membrane-spanning segment. Topologically, residues 96–103 (DLYGRRTT) are cytoplasmic. A helical membrane pass occupies residues 104 to 124 (IIFTSILLVFANLLPVVVVSY). At 125 to 131 (GSLIAGR) the chain is on the extracellular side. The chain crosses the membrane as a helical span at residues 132–152 (IFIGVSISLSAIATCVYIAEL). The Cytoplasmic segment spans residues 153-158 (SPQDKR). A helical membrane pass occupies residues 159 to 179 (GMLVSLNELMIVAGILLAYIC). Over 180 to 191 (NYLFASVNNGWK) the chain is Extracellular. Residues 192-212 (YMFGLITPLAALQAVAMFFLP) traverse the membrane as a helical segment. Residues 213–272 (RSPRFLIMKGYDDAAGKVLQKLRATTDINEELTAIKSSIKAEYQYKFLDLFCSRDNMRAR) are Cytoplasmic-facing. The helical transmembrane segment at 273–293 (LLIGLTLSFFVQITGQPNILF) threads the bilayer. At 294 to 311 (YASTVLKSVGFQSTEAAS) the chain is on the extracellular side. Residues 312–332 (LASTGIGVVKVVSTIPAIFLV) form a helical membrane-spanning segment. The Cytoplasmic portion of the chain corresponds to 333-339 (DKIGSKT). A helical transmembrane segment spans residues 340-360 (FLCIGSAVMAVSLVSVGLVSL). Residues 361–459 (QLDVNYNNIC…IPEYMKWLCL (99 aa)) are Extracellular-facing. N-linked (GlcNAc...) asparagine glycosylation is found at Asn377, Asn395, and Asn419. Residues 460–480 (SSLLAFVAAFSIGLGPMAWLV) traverse the membrane as a helical segment. The Cytoplasmic portion of the chain corresponds to 481-492 (QSEIFPAGIKGR). Residues 493–513 (AFAITSSMNWGMNLLISLTFL) traverse the membrane as a helical segment. The Extracellular segment spans residues 514–522 (TLTEMIGLP). A helical membrane pass occupies residues 523–543 (WMLFGYALMSIASLVFVIMFV). Over 544–588 (PNTKGRPLEEISKELANRSYMCNAVCHRRRSKKKLTPVALIQSPA) the chain is Cytoplasmic.

This sequence belongs to the major facilitator superfamily. Sugar transporter (TC 2.A.1.1) family. Glucose transporter subfamily.

The protein resides in the cell membrane. Its subcellular location is the endomembrane system. It is found in the cytoplasm. The protein localises to the perinuclear region. It catalyses the reaction D-glucose(out) = D-glucose(in). Functionally, insulin-regulated facilitative glucose transporter. The protein is Solute carrier family 2, facilitated glucose transporter member 12 of Xenopus laevis (African clawed frog).